Consider the following 615-residue polypeptide: 70 kDa neurofilament protein (615 aa).

The segment at 1–31 (MSVTQKKTEISTTTTYEGESRPSSGMSGFSY) is disordered. Positions 1–99 (MSVTQKKTEI…KANREREKQD (99 aa)) are head. Over residues 21-30 (RPSSGMSGFS) the composition is skewed to polar residues. The 354-residue stretch at 96–449 (EKQDMRDLNE…KLLEGEESRV (354 aa)) folds into the IF rod domain. Residues 100 to 135 (MRDLNERFANYIEKVRFLEAQNKKLAGELEELKSKW) are coil 1A. Residues 136–145 (GKETSAIKEM) form a linker 1 region. The coil 1B stretch occupies residues 146–284 (YETELEEARK…VHAQELKELA (139 aa)). Residues 285–303 (ALAYRDTTAENREFWRNEL) form a linker 12 region. A coil 2 region spans residues 304–449 (AQAIRDIQQE…KLLEGEESRV (146 aa)). The segment at 450 to 615 (GMKQIVEQVV…ANYTQNTVYQ (166 aa)) is tail. An LTD domain is found at 499–612 (AKTTYQRTSK…EDKANYTQNT (114 aa)).

The protein belongs to the intermediate filament family.

This is 70 kDa neurofilament protein from Doryteuthis pealeii (Longfin inshore squid).